The primary structure comprises 253 residues: Chemotaxis protein PomA (253 aa).

Helical transmembrane passes span 6–26, 28–48, 146–166, and 180–200; these read LLGLIGGFAFVIMAMVLGGSI, MFVDVTSILIVVGGSIFVVLM, FGDVAPAMGMIGTLVGLVAML, and AVALLTTLYGAILSNMVFFPI. The Cytoplasmic segment spans residues 201–253; sequence ADKLSLRRDQETLNRRLIMDGVLAIQDGQNPRVIDSYLKNYLNEGKRALEIDE.

It belongs to the MotA family. Each stator complex is composed of 4 PomA and 2 PomB subunits. 2 A subunits and 1 B subunit are thought to form a single ion channel, so that each stator complex contains two channels.

It localises to the cell inner membrane. Its function is as follows. PomA and PomB comprise the stator element of the flagellar motor complex. Required for rotation of the flagellar motor. Probable transmembrane proton channel. This chain is Chemotaxis protein PomA (pomA), found in Vibrio alginolyticus.